Consider the following 416-residue polypeptide: Serine hydroxymethyltransferase (416 aa).

Residues Leu121 and 125–127 contribute to the (6S)-5,6,7,8-tetrahydrofolate site; that span reads GHL. The residue at position 230 (Lys230) is an N6-(pyridoxal phosphate)lysine.

The protein belongs to the SHMT family. Homodimer. The cofactor is pyridoxal 5'-phosphate.

It is found in the cytoplasm. The enzyme catalyses (6R)-5,10-methylene-5,6,7,8-tetrahydrofolate + glycine + H2O = (6S)-5,6,7,8-tetrahydrofolate + L-serine. It participates in one-carbon metabolism; tetrahydrofolate interconversion. It functions in the pathway amino-acid biosynthesis; glycine biosynthesis; glycine from L-serine: step 1/1. Its function is as follows. Catalyzes the reversible interconversion of serine and glycine with tetrahydrofolate (THF) serving as the one-carbon carrier. This reaction serves as the major source of one-carbon groups required for the biosynthesis of purines, thymidylate, methionine, and other important biomolecules. Also exhibits THF-independent aldolase activity toward beta-hydroxyamino acids, producing glycine and aldehydes, via a retro-aldol mechanism. The chain is Serine hydroxymethyltransferase from Nitrosospira multiformis (strain ATCC 25196 / NCIMB 11849 / C 71).